Here is a 475-residue protein sequence, read N- to C-terminus: UDP-N-acetylmuramate--L-alanine ligase (475 aa).

112 to 118 provides a ligand contact to ATP; the sequence is GTHGKTT.

Belongs to the MurCDEF family.

Its subcellular location is the cytoplasm. The catalysed reaction is UDP-N-acetyl-alpha-D-muramate + L-alanine + ATP = UDP-N-acetyl-alpha-D-muramoyl-L-alanine + ADP + phosphate + H(+). It functions in the pathway cell wall biogenesis; peptidoglycan biosynthesis. Functionally, cell wall formation. This Methylobacillus flagellatus (strain ATCC 51484 / DSM 6875 / VKM B-1610 / KT) protein is UDP-N-acetylmuramate--L-alanine ligase.